Reading from the N-terminus, the 155-residue chain is MSSRMARRRARELALQGVYQWLLSGNSPQVVEAHVEAEAADFDKVDRELFVMLLRGTLDNVGALQDEFSPFIHRPIEELSPIERAILLLGTHELKHNIETPYRVVINEAIELAKAYGGTDGHRFVNGVLDKLAARLRSIEVEAARAKKDAGDGQA.

It belongs to the NusB family.

Functionally, involved in transcription antitermination. Required for transcription of ribosomal RNA (rRNA) genes. Binds specifically to the boxA antiterminator sequence of the ribosomal RNA (rrn) operons. This Azoarcus sp. (strain BH72) protein is Transcription antitermination protein NusB.